Consider the following 86-residue polypeptide: UPF0335 protein BR1752/BS1330_I1746 (86 aa).

The protein belongs to the UPF0335 family.

The protein is UPF0335 protein BR1752/BS1330_I1746 of Brucella suis biovar 1 (strain 1330).